The following is a 31-amino-acid chain: Ranatuerin-2Ca (31 aa).

A disulfide bond links C24 and C29.

Expressed by the skin glands.

The protein resides in the secreted. In terms of biological role, antibacterial activity against Gram-positive bacterium S.aureus and Gram-negative bacterium E.coli. Has activity against C.albicans. This is Ranatuerin-2Ca from Lithobates clamitans (Green frog).